The sequence spans 213 residues: Orotate phosphoribosyltransferase (213 aa).

Lys26 lines the 5-phospho-alpha-D-ribose 1-diphosphate pocket. Residue 34–35 participates in orotate binding; sequence FF. 5-phospho-alpha-D-ribose 1-diphosphate contacts are provided by residues 72-73, Arg99, Lys100, Lys103, His105, and 124-132; these read YK and DDVITAGTA. Orotate contacts are provided by Thr128 and Arg156.

This sequence belongs to the purine/pyrimidine phosphoribosyltransferase family. PyrE subfamily. As to quaternary structure, homodimer. Mg(2+) serves as cofactor.

It catalyses the reaction orotidine 5'-phosphate + diphosphate = orotate + 5-phospho-alpha-D-ribose 1-diphosphate. Its pathway is pyrimidine metabolism; UMP biosynthesis via de novo pathway; UMP from orotate: step 1/2. Catalyzes the transfer of a ribosyl phosphate group from 5-phosphoribose 1-diphosphate to orotate, leading to the formation of orotidine monophosphate (OMP). This is Orotate phosphoribosyltransferase from Shigella flexneri serotype 5b (strain 8401).